We begin with the raw amino-acid sequence, 611 residues long: DNA mismatch repair protein MutL (611 aa).

The tract at residues 353 to 387 is disordered; that stretch reads NRQAAGGNHFATPAPAAAPRPASTASSSWQRQEPV. Over residues 363-380 the composition is skewed to low complexity; that stretch reads ATPAPAAAPRPASTASSS.

This sequence belongs to the DNA mismatch repair MutL/HexB family.

This protein is involved in the repair of mismatches in DNA. It is required for dam-dependent methyl-directed DNA mismatch repair. May act as a 'molecular matchmaker', a protein that promotes the formation of a stable complex between two or more DNA-binding proteins in an ATP-dependent manner without itself being part of a final effector complex. This Erwinia tasmaniensis (strain DSM 17950 / CFBP 7177 / CIP 109463 / NCPPB 4357 / Et1/99) protein is DNA mismatch repair protein MutL.